The following is a 201-amino-acid chain: Recombination protein RecR (201 aa).

Residues 59-74 form a C4-type zinc finger; sequence CEICGNMDTENICRIC. Residues 82-177 enclose the Toprim domain; the sequence is SIIAIVETVA…KISRLASGIP (96 aa).

It belongs to the RecR family.

May play a role in DNA repair. It seems to be involved in an RecBC-independent recombinational process of DNA repair. It may act with RecF and RecO. The chain is Recombination protein RecR from Rickettsia rickettsii (strain Iowa).